Here is a 120-residue protein sequence, read N- to C-terminus: Non-specific lipid-transfer protein 2 (120 aa).

The signal sequence occupies residues 1 to 25 (MATSMKLACVALVMCMVVIAPMAEA). 4 cysteine pairs are disulfide-bonded: cysteine 29-cysteine 78, cysteine 39-cysteine 55, cysteine 56-cysteine 101, and cysteine 76-cysteine 115.

It belongs to the plant LTP family. Expressed in roots, stem, leaves and tendrils of the mature plant.

Its function is as follows. Plant non-specific lipid-transfer proteins transfer phospholipids as well as galactolipids across membranes. May play a role in wax or cutin deposition in the cell walls of expanding epidermal cells and certain secretory tissues. In Pisum sativum (Garden pea), this protein is Non-specific lipid-transfer protein 2.